The chain runs to 842 residues: Taste receptor type 1 member 1 (842 aa).

Positions 1–19 (MLFWAAHLLLSLQLAVAYC) are cleaved as a signal peptide. The Extracellular portion of the chain corresponds to 20-568 (WAFSCQRTES…EFLGWHEPIS (549 aa)). Asn88, Asn89, Asn96, Asn136, Asn292, Asn480, and Asn530 each carry an N-linked (GlcNAc...) asparagine glycan. The helical transmembrane segment at 569 to 589 (LVLLAANTLLLLLLIGTAGLF) threads the bilayer. Over 590 to 604 (AWRLHTPVVRSAGGR) the chain is Cytoplasmic. The helical transmembrane segment at 605–625 (LCFLMLGSLVAGSCSLYSFFG) threads the bilayer. The Extracellular segment spans residues 626 to 640 (KPTVPACLLRQPLFS). The chain crosses the membrane as a helical span at residues 641 to 661 (LGFAIFLSCLTIRSFQLVIIF). Over 662-681 (KFSTKVPTFYHTWAQNHGAG) the chain is Cytoplasmic. Residues 682-702 (IFVIVSSTVHLFLCLTWLAMW) form a helical membrane-spanning segment. Residues 703 to 725 (TPRPTREYQRFPHLVILECTEVN) are Extracellular-facing. A helical membrane pass occupies residues 726 to 746 (SVGFLVAFAHNILLSISTFVC). The Cytoplasmic portion of the chain corresponds to 747–762 (SYLGKELPENYNEAKC). A helical transmembrane segment spans residues 763–783 (VTFSLLLHFVSWIAFFTMSSI). Residues 784–789 (YQGSYL) lie on the Extracellular side of the membrane. Residues 790–810 (PAVNVLAGLATLSGGFSGYFL) form a helical membrane-spanning segment. Residues 811-842 (PKCYVILCRPELNNTEHFQASIQDYTRRCGTT) are Cytoplasmic-facing.

It belongs to the G-protein coupled receptor 3 family. TAS1R subfamily. As to quaternary structure, forms heterodimers with TAS1R3. Expressed strongly only in fungiform papillae.

It is found in the cell membrane. Its function is as follows. Putative taste receptor. TAS1R1/TAS1R3 responds to the umami taste stimulus (the taste of monosodium glutamate) and also to most of the 20 standard L-amino acids, but not to their D-enantiomers or other compounds. Sequence differences within and between species can significantly influence the selectivity and specificity of taste responses. The polypeptide is Taste receptor type 1 member 1 (Tas1r1) (Mus musculus (Mouse)).